A 580-amino-acid chain; its full sequence is Malto-oligosyltrehalose trehalohydrolase (580 aa).

A disordered region spans residues 56–88 (LPDPRSARQPDGVHARSQRWEPPGQFGAARTDT). Over residues 60-69 (RSARQPDGVH) the composition is skewed to basic and acidic residues. 245–250 (RLDAVH) serves as a coordination point for substrate. The Nucleophile role is filled by Asp247. The active-site Proton donor is Glu284. Substrate-binding positions include 309–313 (DDIHH) and 379–384 (HDQVGN).

This sequence belongs to the glycosyl hydrolase 13 family.

Its subcellular location is the cytoplasm. The enzyme catalyses hydrolysis of (1-&gt;4)-alpha-D-glucosidic linkage in 4-alpha-D-[(1-&gt;4)-alpha-D-glucanosyl]n trehalose to yield trehalose and (1-&gt;4)-alpha-D-glucan.. It functions in the pathway glycan biosynthesis; trehalose biosynthesis. Its function is as follows. Is involved in the biosynthesis of trehalose but not in that of capsular glucan and glycogen. The protein is Malto-oligosyltrehalose trehalohydrolase (treZ) of Mycobacterium tuberculosis (strain CDC 1551 / Oshkosh).